A 165-amino-acid polypeptide reads, in one-letter code: Nucleotide-binding protein P9301_05061 (165 aa).

It belongs to the YajQ family.

Functionally, nucleotide-binding protein. This Prochlorococcus marinus (strain MIT 9301) protein is Nucleotide-binding protein P9301_05061.